We begin with the raw amino-acid sequence, 158 residues long: Male-specific protein scotti (158 aa).

Positions 24-43 (NVPDGNGDGDGDGDGDGNDA) are disordered. Residues 30–42 (GDGDGDGDGDGND) are compositionally biased toward acidic residues.

This sequence belongs to the male-specific scotti family.

Its function is as follows. Post-meiotically transcribed gene that has a role in late spermiogenesis; required for actin cone progression during spermatid individualization. This chain is Male-specific protein scotti, found in Drosophila virilis (Fruit fly).